The following is a 519-amino-acid chain: MAASFLTMDNSRTRQNMNGSANWSQQSGRTSTSSLEDLEIPKFRSFAPSSISISPSLVSPSTCFSPSLFLDSPAFVSSSANVLASPTTGALITNVTNQKGINEGDKSNNNNFNLFDFSFHTQSSGVSAPTTTTTTTTTTTTTNSSIFQSQEQQKKNQSEQWSQTETRPNNQAVSYNGREQRKGEDGYNWRKYGQKQVKGSENPRSYYKCTFPNCPTKKKVERSLEGQITEIVYKGSHNHPKPQSTRRSSSSSSTFHSAVYNASLDHNRQASSDQPNSNNSFHQSDSFGMQQEDNTTSDSVGDDEFEQGSSIVSRDEEDCGSEPEAKRWKGDNETNGGNGGGSKTVREPRIVVQTTSDIDILDDGYRWRKYGQKVVKGNPNPRSYYKCTTIGCPVRKHVERASHDMRAVITTYEGKHNHDVPAARGSGYATNRAPQDSSSVPIRPAAIAGHSNYTTSSQAPYTLQMLHNNNTNTGPFGYAMNNNNNNSNLQTQQNFVGGGFSRAKEEPNEETSFFDSFMP.

Disordered regions lie at residues 1 to 34 (MAAS…STSS) and 123 to 212 (SSGV…CTFP). Positions 7–34 (TMDNSRTRQNMNGSANWSQQSGRTSTSS) are enriched in polar residues. The segment covering 130–142 (TTTTTTTTTTTTT) has biased composition (low complexity). Positions 164–174 (TETRPNNQAVS) are enriched in polar residues. Residues 178 to 188 (REQRKGEDGYN) are compositionally biased toward basic and acidic residues. A DNA-binding region (WRKY 1) is located at residues 178–242 (REQRKGEDGY…YKGSHNHPKP (65 aa)). Residues Cys-209, Cys-214, His-237, and His-239 each coordinate Zn(2+). Disordered stretches follow at residues 232–255 (VYKG…SSTF) and 267–349 (NRQA…REPR). The segment covering 245-254 (TRRSSSSSST) has biased composition (low complexity). Over residues 269–299 (QASSDQPNSNNSFHQSDSFGMQQEDNTTSDS) the composition is skewed to polar residues. Residues 323–332 (PEAKRWKGDN) are compositionally biased toward basic and acidic residues. Residues 356 to 421 (SDIDILDDGY…YEGKHNHDVP (66 aa)) constitute a DNA-binding region (WRKY 2). The Zn(2+) site is built by Cys-387, Cys-392, His-416, and His-418.

The protein belongs to the WRKY group I family. Interacts with MKS1. Interacts with ATG18A. Interacts with SIB1 and SIB2. Interacts with VQ1 and VQ10. Phosphorylated by MPK4. Phosphorylated on serine residues by MPK3 and MPK6 following infection with the necrotrophic fungal pathogen B.cinerea. In terms of tissue distribution, highly expressed in roots, leaves and flowers, and at lower levels in stems, siliques and seeds.

The protein resides in the nucleus. In terms of biological role, transcription factor. Interacts specifically with the W box (5'-TTGAC[CT]-3'), a frequently occurring elicitor-responsive cis-acting element. Involved in defense responses. Required for resistance to the necrotrophic fungal pathogen B.cinerea. Regulates the antagonistic relationship between defense pathways mediating responses to the bacterial pathogen P. syringae and the necrotrophic pathogen B.cinerea. Required for the phytoalexin camalexin synthesis following infection with B.cinerea. Acts as a positive regulator of the camalexin biosynthetic genes PAD3 (CYP71B15) and CYP71A13 by binding to their promoters. Acts downstream of MPK3 and MPK6 in reprogramming the expression of camalexin biosynthetic genes, which drives the metabolic flow to camalexin production. Functions with WRKY25 as positive regulator of salt stress response and abscisic acid (ABA) signaling. Functions with WRKY25 and WRKY26 as positive regulator of plant thermotolerance by partially participating in ethylene-response signal transduction pathway. The DNA-binding activity of WRKY33 is increased by SIB1 and SIB2. The sequence is that of Probable WRKY transcription factor 33 (WRKY33) from Arabidopsis thaliana (Mouse-ear cress).